Consider the following 456-residue polypeptide: Argininosuccinate lyase (456 aa).

It belongs to the lyase 1 family. Argininosuccinate lyase subfamily.

The protein resides in the cytoplasm. It catalyses the reaction 2-(N(omega)-L-arginino)succinate = fumarate + L-arginine. Its pathway is amino-acid biosynthesis; L-arginine biosynthesis; L-arginine from L-ornithine and carbamoyl phosphate: step 3/3. In Shewanella woodyi (strain ATCC 51908 / MS32), this protein is Argininosuccinate lyase.